A 1134-amino-acid polypeptide reads, in one-letter code: DNA polymerase II large subunit (1134 aa).

Belongs to the archaeal DNA polymerase II family. In terms of assembly, heterodimer of a large subunit and a small subunit.

The enzyme catalyses DNA(n) + a 2'-deoxyribonucleoside 5'-triphosphate = DNA(n+1) + diphosphate. The catalysed reaction is Exonucleolytic cleavage in the 3'- to 5'-direction to yield nucleoside 5'-phosphates.. Its function is as follows. Possesses two activities: a DNA synthesis (polymerase) and an exonucleolytic activity that degrades single-stranded DNA in the 3'- to 5'-direction. Has a template-primer preference which is characteristic of a replicative DNA polymerase. The protein is DNA polymerase II large subunit of Methanocella arvoryzae (strain DSM 22066 / NBRC 105507 / MRE50).